The chain runs to 312 residues: Ribosomal protein L11 methyltransferase (312 aa).

Threonine 160, glycine 181, aspartate 203, and asparagine 246 together coordinate S-adenosyl-L-methionine.

Belongs to the methyltransferase superfamily. PrmA family.

The protein localises to the cytoplasm. The enzyme catalyses L-lysyl-[protein] + 3 S-adenosyl-L-methionine = N(6),N(6),N(6)-trimethyl-L-lysyl-[protein] + 3 S-adenosyl-L-homocysteine + 3 H(+). Methylates ribosomal protein L11. The sequence is that of Ribosomal protein L11 methyltransferase from Staphylococcus aureus (strain COL).